The sequence spans 1205 residues: Partitioning defective 3 homolog B (1205 aa).

Disordered stretches follow at residues Glu83 to Phe104 and Val137 to Leu165. At Ser100 the chain carries Phosphoserine. The region spanning Thr201 to Pro289 is the PDZ 1 domain. Residues Val318–Gly374 are disordered. A compositionally biased stretch (polar residues) spans Lys329 to Ser352. 3 positions are modified to phosphoserine: Ser346, Ser352, and Ser368. A compositionally biased stretch (low complexity) spans Pro356 to Gly374. PDZ domains are found at residues Lys383–Arg468 and Glu498–Gln585. Phosphoserine occurs at positions 635, 710, 728, 730, 746, 749, and 801. The tract at residues Ala707–Lys743 is disordered. Disordered regions lie at residues Ala784 to Glu921 and Pro1111 to Val1205. The segment covering His806–Ser822 has biased composition (polar residues). Basic and acidic residues-rich tracts occupy residues Lys838–Arg865 and Lys881–Glu921. The residue at position 1184 (Ser1184) is a Phosphoserine.

It belongs to the PAR3 family. As to quaternary structure, interacts with PARD6B. Interacts with INSC/inscuteable. As to expression, highly expressed in kidney, lung and skeletal muscle. Expressed at intermediate levels in brain, heart, placenta, liver and pancreas. Isoform 1 is predominant, while isoform 2 and isoform 3 are expressed at lower levels.

It localises to the endomembrane system. It is found in the cell junction. The protein localises to the tight junction. In terms of biological role, putative adapter protein involved in asymmetrical cell division and cell polarization processes. May play a role in the formation of epithelial tight junctions. The chain is Partitioning defective 3 homolog B (PARD3B) from Homo sapiens (Human).